Reading from the N-terminus, the 1117-residue chain is Lid2 complex component snt2 (1117 aa).

Residues 89–208 form the BAH domain; it reads ELIQPNDFVL…QNINKVFDVV (120 aa). A Phorbol-ester/DAG-type zinc finger spans residues 227–282; that stretch reads NYDFIVTEYGKGRALLNEPSNCKVCKKWCAFDFSVQCADCKKYYHMDCVVPPLLKK. The PHD-type 1 zinc finger occupies 245 to 297; sequence PSNCKVCKKWCAFDFSVQCADCKKYYHMDCVVPPLLKKPPHGFGWTCATCSFA. The segment at 361-380 is disordered; that stretch reads SSRNLHQQSRKSLDENKPNS. A PHD-type 2 zinc finger spans residues 798–882; the sequence is KKCCALCGIV…SWACLSCRSN (85 aa). A C2HC pre-PHD-type zinc finger spans residues 890-925; sequence DNHCVLCLQSASHSLMKKTVEGNWVHLICASWTPDV. The segment at 948–1002 adopts a PHD-type 3; degenerate zinc-finger fold; the sequence is KKCEVCGNSFGVCVSSPNSGLTSHVTCAEKANWYLGFEFVKQDQSPFSMLSNLKS.

As to quaternary structure, component of the Lid2 complex composed of ash2, jmj3, lid2, sdc1 and snt2.

Its subcellular location is the nucleus. The chain is Lid2 complex component snt2 (snt2) from Schizosaccharomyces pombe (strain 972 / ATCC 24843) (Fission yeast).